Consider the following 396-residue polypeptide: Arginine biosynthesis bifunctional protein ArgJ (396 aa).

The substrate site is built by threonine 147, lysine 173, threonine 184, glutamate 270, asparagine 391, and serine 396. Threonine 184 functions as the Nucleophile in the catalytic mechanism.

Belongs to the ArgJ family. As to quaternary structure, heterotetramer of two alpha and two beta chains.

It is found in the cytoplasm. The catalysed reaction is N(2)-acetyl-L-ornithine + L-glutamate = N-acetyl-L-glutamate + L-ornithine. It carries out the reaction L-glutamate + acetyl-CoA = N-acetyl-L-glutamate + CoA + H(+). The protein operates within amino-acid biosynthesis; L-arginine biosynthesis; L-ornithine and N-acetyl-L-glutamate from L-glutamate and N(2)-acetyl-L-ornithine (cyclic): step 1/1. It participates in amino-acid biosynthesis; L-arginine biosynthesis; N(2)-acetyl-L-ornithine from L-glutamate: step 1/4. Catalyzes two activities which are involved in the cyclic version of arginine biosynthesis: the synthesis of N-acetylglutamate from glutamate and acetyl-CoA as the acetyl donor, and of ornithine by transacetylation between N(2)-acetylornithine and glutamate. This Lactococcus lactis subsp. lactis (strain IL1403) (Streptococcus lactis) protein is Arginine biosynthesis bifunctional protein ArgJ.